The primary structure comprises 472 residues: Protein translocase subunit SecD (472 aa).

Transmembrane regions (helical) follow at residues 8–28, 300–320, 325–347, 353–375, 396–416, and 424–444; these read ILFT…PLSG, TIIN…IIFY, VIAD…WTGA, GIAG…YERI, VFST…VLFF, and GFAV…LVVS.

Belongs to the SecD/SecF family. SecD subfamily. In terms of assembly, forms a complex with SecF. Part of the essential Sec protein translocation apparatus which comprises SecA, SecYEG and auxiliary proteins SecDF. Other proteins may also be involved.

It is found in the cell inner membrane. Part of the Sec protein translocase complex. Interacts with the SecYEG preprotein conducting channel. SecDF uses the proton motive force (PMF) to complete protein translocation after the ATP-dependent function of SecA. This is Protein translocase subunit SecD from Petrotoga mobilis (strain DSM 10674 / SJ95).